The following is a 172-amino-acid chain: Bifunctional protein PyrR (172 aa).

Positions 90–102 (LVLVDDVLMSGRT) match the PRPP-binding motif.

Belongs to the purine/pyrimidine phosphoribosyltransferase family. PyrR subfamily.

It carries out the reaction UMP + diphosphate = 5-phospho-alpha-D-ribose 1-diphosphate + uracil. In terms of biological role, regulates the transcription of the pyrimidine nucleotide (pyr) operon in response to exogenous pyrimidines. Also displays a weak uracil phosphoribosyltransferase activity which is not physiologically significant. The chain is Bifunctional protein PyrR from Pseudomonas putida (strain GB-1).